A 970-amino-acid chain; its full sequence is Polycystin-2 (970 aa).

The segment covering 1 to 11 (MVNSSRVQPQQ) has biased composition (polar residues). The interval 1–182 (MVNSSRVQPQ…GDPLHRHLPL (182 aa)) is disordered. Topologically, residues 1-221 (MVNSSRVQPQ…STDREKYLKS (221 aa)) are cytoplasmic. Residues 25-45 (GPGRLMAGGAIAGAGLAAPGG) are compositionally biased toward low complexity. Residues 47 to 60 (REQRGLEIEMERIR) show a composition bias toward basic and acidic residues. Residues 62–83 (AAARDPPAGASASPSPPLSSCS) show a composition bias toward low complexity. Phosphoserine is present on residues S76 and S80. The segment covering 95 to 109 (EAEEEEEEEEVEGEE) has biased composition (acidic residues). Residues 125–138 (RRSASSSAVSSAGA) are compositionally biased toward low complexity. Residue R139 is modified to Omega-N-methylarginine. The segment covering 139–148 (RGRGLGGYHG) has biased composition (gly residues). Residues 222–243 (VLRELATYLLFLIVLCILTYGM) form a helical membrane-spanning segment. Residues 244–470 (MSSSVYYYTR…PVKLIRYVTT (227 aa)) lie on the Extracellular side of the membrane. N-linked (GlcNAc...) asparagine glycosylation is found at N301, N307, and N330. A disulfide bridge links C333 with C346. N-linked (GlcNAc...) asparagine glycans are attached at residues N364 and N377. A helical membrane pass occupies residues 471 to 491 (FDFFLAACEIIFCLFILYYVV). At 492 to 507 (EEILEIRIHKLHYFRS) the chain is on the cytoplasmic side. Residues 508–528 (FWNCLDVVIIVLSVVAIGINI) traverse the membrane as a helical segment. The Extracellular portion of the chain corresponds to 529 to 554 (YRTSNVEALLQFLEDQNTFPNFENLA). The chain crosses the membrane as a helical span at residues 555–575 (YWQTQFNNIAAVIVFFVWIKL). Position 559 (Q559) interacts with cholesterol. Topologically, residues 576-599 (FKFINFNRTMSQLSTTMSRCAKDL) are cytoplasmic. Residues 600–621 (FGFAIMFFIIFLAYAQLAYLVF) traverse the membrane as a helical segment. Over 622–633 (GTQVDDFSTFQE) the chain is Extracellular. Positions 634 to 648 (CIFTQFRIILGDINF) form an intramembrane region, pore-forming. L643 contributes to the Ca(2+) binding site. The Selectivity filter signature appears at 643–645 (LGD). The Extracellular portion of the chain corresponds to 649-656 (AEIEEANR). Residues 657–677 (VLGPIYFTTFVFFMFFILLNM) traverse the membrane as a helical segment. Over 678 to 970 (FLAIINDTYS…GGNGSANIHV (293 aa)) the chain is Cytoplasmic. Residues 750–785 (KGHTDAEIEAIFTKYDQDGDQELTEHEHQQMRDDLE) enclose the EF-hand domain. Residues D765, D767, D769, E771, and E776 each contribute to the Ca(2+) site. Positions 766–833 (QDGDQELTEH…HSSRRRGSIS (68 aa)) are disordered. Over residues 772-797 (LTEHEHQQMRDDLEKEREDLDLDHSS) the composition is skewed to basic and acidic residues. The span at 798-809 (LPRPMSSRSFPR) shows a compositional bias: low complexity. A phosphoserine mark is found at S803, S810, S814, and S831. The segment at 805 to 824 (RSFPRSLDDSEEEDDDDSGH) is linker. The important for interaction with PACS1 and PACS2 stretch occupies residues 812–823 (DDSEEEDDDDSG). Residues 835–874 (GVSYEEFQVLVRRVDRMEHSIGSIVSKIDAVIVKLEIMER) are a coiled coil. Residues 921–970 (DDAASQISHGLGTPLGLNGQPRPRSSRPSSSQSTEGMEGGGGNGSANIHV) form a disordered region. Low complexity predominate over residues 940–956 (QPRPRSSRPSSSQSTEG).

Belongs to the polycystin family. In terms of assembly, homotetramer. Component of the heterotetrameric polycystin channel complex with PKD1; the tetramer contains one PKD1 chain and three PKD2 chains. Isoform 1 interacts with PKD1 while isoform 3 does not. Interacts with PKD1L1; probably forms a Ca(2+) channel. Interacts with CD2AP. Interacts with HAX1. Interacts with NEK8. Part of a complex containing AKAP5, ADCY5, ADCY6 and PDE4C. Interacts (via C-terminus) with TRPV4 (via C-terminus). Interacts (via C-terminal acidic region) with PACS1 and PACS2; these interactions retain the protein in the endoplasmic reticulum and prevent trafficking to the cell membrane. Interacts with TMEM33. Form a heterotetramer with TRPC1 with a 2:2 stoichiometry; has distinct channel properties separate from PKD2 or TRPC1 homomers alone. Interacts with TMEM120A; TMEM120A inhibits PKD2 channel activity through the physical association of PKD2 with TMEM120A. Interacts (via N-terminus) with RYR2; regulates RYR2 channel activity. N-glycosylated. The four subunits in a tetramer probably differ in the extent of glycosylation; simultaneous glycosylation of all experimentally validated sites would probably create steric hindrance. Post-translationally, phosphorylated. Phosphorylation is important for protein function; a mutant that lacks the N-terminal phosphorylation sites cannot complement a zebrafish pkd2-deficient mutant. PKD-mediated phosphorylation at the C-terminus regulates its function in the release of Ca(2+) stores from the endoplasmic reticulum. Phosphorylation at Ser-814 regulates PKD2 trafficking. Phosphorylation at Ser-76 is required for PKD2 trafficking to or retention at the lateral plasma membrane. Phosphorylation at Ser-803, Ser-814 and Ser-831 regulates PKD2 channel activity. In terms of processing, sumoylated by SUMO1; sumoylation regulates PKD2 membrane recycling and is necessary for intravascular pressure-induced arterial contractility. Expressed in mesenchymally derived structures in the developing embryo at day 12.5. In adult, mostly expressed in kidney.

The protein localises to the cell projection. The protein resides in the cilium membrane. Its subcellular location is the endoplasmic reticulum membrane. It localises to the cell membrane. It is found in the basolateral cell membrane. The protein localises to the cytoplasmic vesicle membrane. The protein resides in the golgi apparatus. Its subcellular location is the vesicle. It localises to the secreted. It is found in the extracellular exosome. The catalysed reaction is K(+)(in) = K(+)(out). It catalyses the reaction Na(+)(in) = Na(+)(out). The enzyme catalyses Ca(2+)(in) = Ca(2+)(out). With respect to regulation, channel activity is regulated by phosphorylation. Channel activity is regulated by intracellular Ca(2+). At the endoplasmic reticulum membrane (ER), TMEM33 enhances its channel activity. TMEM120A inhibits the channel activity of PKD2, and mediates mechanosensitivity of the PKD2-TMEM120A channel complex. PKD1/PKD2 complex on the plasma membrane is activated by PKD1 N-terminus. In terms of biological role, forms a nonselective cation channel. Can function as a homotetrameric ion channel or can form heteromer with PKD1. Displays distinct function depending on its subcellular localization and regulation by its binding partners. Functions as a cation channel, with a preference for monovalent cations over divalent cations that allows K(+), Na(+) and Ca(2+) influx, with low selectivity for Ca(2+). Involved in fluid-flow mechanosensation in the primary cilium in renal epithelium. In the endoplasmic reticulum, likely functions as a K(+) channel to facilitate Ca(2+) release. The heterotetrameric PKD1/PKD2 channel has higher Ca(2+) permeability than homomeric PKD2 channel and acts as a primarily Ca(2+)-permeable channel. Interacts with and acts as a regulator of a number of other channels, such as TRPV4, TRPC1, IP3R, RYR2, ultimately further affecting intracellular signaling, to modulate intracellular Ca(2+) signaling. Together with TRPV4, forms mechano- and thermosensitive channels in cilium. In cardiomyocytes, PKD2 modulates Ca(2+) release from stimulated RYR2 receptors through direct association. Also involved in left-right axis specification via its role in sensing nodal flow; forms a complex with PKD1L1 in cilia to facilitate flow detection in left-right patterning. Acts as a regulator of cilium length together with PKD1. Mediates systemic blood pressure and contributes to the myogenic response in cerebral arteries though vasoconstriction. This Bos taurus (Bovine) protein is Polycystin-2.